The chain runs to 168 residues: Large ribosomal subunit protein uL10 (168 aa).

Belongs to the universal ribosomal protein uL10 family. As to quaternary structure, part of the ribosomal stalk of the 50S ribosomal subunit. The N-terminus interacts with L11 and the large rRNA to form the base of the stalk. The C-terminus forms an elongated spine to which L12 dimers bind in a sequential fashion forming a multimeric L10(L12)X complex.

In terms of biological role, forms part of the ribosomal stalk, playing a central role in the interaction of the ribosome with GTP-bound translation factors. The sequence is that of Large ribosomal subunit protein uL10 from Acinetobacter baumannii (strain AB307-0294).